The sequence spans 344 residues: Oxygen sensor histidine kinase NreB (344 aa).

Residues Cys-58, Cys-61, Cys-73, and Cys-76 each contribute to the [4Fe-4S] cluster site. Residues 147 to 344 (ENERKRISRE…GTIITLDIPI (198 aa)) enclose the Histidine kinase domain. His-158 carries the phosphohistidine; by autocatalysis modification.

[4Fe-4S] cluster serves as cofactor. In terms of processing, autophosphorylated.

Its subcellular location is the cytoplasm. The enzyme catalyses ATP + protein L-histidine = ADP + protein N-phospho-L-histidine.. Its function is as follows. Member of the two-component regulatory system NreB/NreC involved in the control of dissimilatory nitrate/nitrite reduction in response to oxygen. NreB functions as a direct oxygen sensor histidine kinase which is autophosphorylated, in the absence of oxygen, probably at the conserved histidine residue, and transfers its phosphate group probably to a conserved aspartate residue of NreC. NreB/NreC activates the expression of the nitrate (narGHJI) and nitrite (nir) reductase operons, as well as the putative nitrate transporter gene narT. This is Oxygen sensor histidine kinase NreB (nreB) from Staphylococcus epidermidis (strain ATCC 35984 / DSM 28319 / BCRC 17069 / CCUG 31568 / BM 3577 / RP62A).